A 209-amino-acid chain; its full sequence is Ribosomal RNA large subunit methyltransferase E (209 aa).

The S-adenosyl-L-methionine site is built by Gly-63, Trp-65, Asp-83, Asp-99, and Asp-124. Lys-164 functions as the Proton acceptor in the catalytic mechanism.

Belongs to the class I-like SAM-binding methyltransferase superfamily. RNA methyltransferase RlmE family.

The protein localises to the cytoplasm. It carries out the reaction uridine(2552) in 23S rRNA + S-adenosyl-L-methionine = 2'-O-methyluridine(2552) in 23S rRNA + S-adenosyl-L-homocysteine + H(+). Specifically methylates the uridine in position 2552 of 23S rRNA at the 2'-O position of the ribose in the fully assembled 50S ribosomal subunit. This Pseudoalteromonas atlantica (strain T6c / ATCC BAA-1087) protein is Ribosomal RNA large subunit methyltransferase E.